A 261-amino-acid polypeptide reads, in one-letter code: Indole-3-glycerol phosphate synthase (261 aa).

Belongs to the TrpC family.

The catalysed reaction is 1-(2-carboxyphenylamino)-1-deoxy-D-ribulose 5-phosphate + H(+) = (1S,2R)-1-C-(indol-3-yl)glycerol 3-phosphate + CO2 + H2O. Its pathway is amino-acid biosynthesis; L-tryptophan biosynthesis; L-tryptophan from chorismate: step 4/5. This Burkholderia multivorans (strain ATCC 17616 / 249) protein is Indole-3-glycerol phosphate synthase.